Reading from the N-terminus, the 324-residue chain is tRNA-modifying protein YgfZ (324 aa).

Residue Trp-186 participates in folate binding.

This sequence belongs to the tRNA-modifying YgfZ family.

The protein resides in the cytoplasm. In terms of biological role, folate-binding protein involved in regulating the level of ATP-DnaA and in the modification of some tRNAs. It is probably a key factor in regulatory networks that act via tRNA modification, such as initiation of chromosomal replication. The sequence is that of tRNA-modifying protein YgfZ from Colwellia psychrerythraea (strain 34H / ATCC BAA-681) (Vibrio psychroerythus).